A 104-amino-acid polypeptide reads, in one-letter code: MIKLKIKSGDIVRVIAGDHKGAEGKVLRVYREKNKAIVEGVNLVSKHTKPSAKNPQGGIVKKEASIQISNIALIDPKTKETTRVGIRVEGDKKVRFSKKSNQVL.

Belongs to the universal ribosomal protein uL24 family. Part of the 50S ribosomal subunit.

Functionally, one of two assembly initiator proteins, it binds directly to the 5'-end of the 23S rRNA, where it nucleates assembly of the 50S subunit. In terms of biological role, one of the proteins that surrounds the polypeptide exit tunnel on the outside of the subunit. The sequence is that of Large ribosomal subunit protein uL24 from Flavobacterium johnsoniae (strain ATCC 17061 / DSM 2064 / JCM 8514 / BCRC 14874 / CCUG 350202 / NBRC 14942 / NCIMB 11054 / UW101) (Cytophaga johnsonae).